The sequence spans 1379 residues: DNA-directed RNA polymerase subunit beta'' (1379 aa).

Positions 220, 293, 300, and 303 each coordinate Zn(2+).

The protein belongs to the RNA polymerase beta' chain family. RpoC2 subfamily. In terms of assembly, in plastids the minimal PEP RNA polymerase catalytic core is composed of four subunits: alpha, beta, beta', and beta''. When a (nuclear-encoded) sigma factor is associated with the core the holoenzyme is formed, which can initiate transcription. Requires Zn(2+) as cofactor.

It localises to the plastid. It is found in the chloroplast. It carries out the reaction RNA(n) + a ribonucleoside 5'-triphosphate = RNA(n+1) + diphosphate. DNA-dependent RNA polymerase catalyzes the transcription of DNA into RNA using the four ribonucleoside triphosphates as substrates. The protein is DNA-directed RNA polymerase subunit beta'' of Barbarea verna (Land cress).